We begin with the raw amino-acid sequence, 309 residues long: MKMATNGRFFTIGLVASWYSSNIGVLLLNKYLLSNYGFKYPIFLTMCHMTACSLLSYVAIAWLKMVPMQTIRSRVQFFKIAALSLVFCVSVVFGNISLRFLPVSFNQAIGATTPFFTAVFAYLMTRKKEAWLTYFTLVPVVTGVVIASGGEPSFHLFGFLMCIAATAARALKSVLQGILLSSEGEKLNSMNLLLYMAPIAVVLLLPATLIMEKNVVGITIALARDDFRIVWYLLFNSALAYLVNLTNFLVTNHTSALTLQVLGNAKGAVAVVVSILIFKNPVSVTGMLGYSLTVCGVILYSEAKKRNKN.

Helical transmembrane passes span 9-29 (FFTI…LLLN), 42-62 (IFLT…AIAW), 77-97 (FFKI…GNIS), 100-120 (FLPV…TAVF), 130-150 (AWLT…ASGG), 154-174 (FHLF…LKSV), 192-212 (LLLY…LIME), 229-249 (IVWY…TNFL), 256-278 (ALTL…ILIF), and 282-301 (VSVT…ILYS). An EamA domain is found at 30-147 (KYLLSNYGFK…VPVVTGVVIA (118 aa)).

The protein belongs to the TPT transporter family. TPT (TC 2.A.7.9) subfamily.

It is found in the membrane. The polypeptide is Probable sugar phosphate/phosphate translocator At5g05820 (Arabidopsis thaliana (Mouse-ear cress)).